Consider the following 275-residue polypeptide: uncharacterized protein (275 aa).

Residues 171 to 268 form the HTH araC/xylS-type domain; it reads KMVCEFLEEH…GLTPKQYMKI (98 aa). 2 consecutive DNA-binding regions (H-T-H motif) follow at residues 188 to 209 and 235 to 258; these read NDLS…TKQK and PIDA…KRQV.

This is an uncharacterized protein from Bacillus subtilis (strain 168).